Consider the following 789-residue polypeptide: SH3 domain-containing protein 19 (789 aa).

3 disordered regions span residues 24–170, 209–404, and 472–497; these read TNTE…PPRL, DDDV…RPKP, and TPLD…SGAP. S65 is subject to Phosphoserine. Residues 296–305 are compositionally biased toward basic and acidic residues; it reads SHSDRTRNPE. Pro residues predominate over residues 335 to 351; it reads WRPPPKGAPERPPPPKL. A compositionally biased stretch (low complexity) spans 352 to 361; sequence PASKSSNKNL. The residue at position 368 (S368) is a Phosphoserine. SH3 domains follow at residues 414–476, 494–553, 570–629, 660–719, and 729–788; these read LSVP…PLDE, SGAP…VIVD, AKGP…LVGD, PPGE…PCPA, and PKGR…FLQV. The span at 474–484 shows a compositional bias: basic and acidic residues; that stretch reads LDERPRGRPND. Positions 635-663 are disordered; it reads ANILSTKVPPKTKNEDPGSNSQDSSPPGE.

As to quaternary structure, interacts with ADAM12. Isoform 2 (but not isoform 1) interacts with ADAM9, ADAM10, ADAM15 and ADAM17. Interacts with SH3GL1 SH3 domain. Interacts via SH3 3 and SH3 4 or SH3 4 and SH3 5 domains with SOS2. Probably forms a trimeric complex with SH3GL1 and SOS2. Interacts with SH3YL1. Expressed in hair follicles.

Its subcellular location is the cytoplasm. Its function is as follows. May play a role in regulating A disintegrin and metalloproteases (ADAMs) in the signaling of EGFR-ligand shedding. May be involved in suppression of Ras-induced cellular transformation and Ras-mediated activation of ELK1. Plays a role in the regulation of cell morphology and cytoskeletal organization. This Mus musculus (Mouse) protein is SH3 domain-containing protein 19 (Sh3d19).